We begin with the raw amino-acid sequence, 273 residues long: NAD-dependent protein deacylase (273 aa).

The 253-residue stretch at 20 to 272 folds into the Deacetylase sirtuin-type domain; the sequence is RERLRQRIFF…PEFVEKLLEG (253 aa). 48-67 lines the NAD(+) pocket; that stretch reads GAGISAESGIRTFRAADGLW. Residues tyrosine 92 and arginine 95 each coordinate substrate. 129–132 provides a ligand contact to NAD(+); the sequence is QNID. Histidine 147 acts as the Proton acceptor in catalysis. Residues cysteine 155 and cysteine 174 each contribute to the Zn(2+) site. Residues 214–216, 240–242, and alanine 258 contribute to the NAD(+) site; these read GTS and NLE.

This sequence belongs to the sirtuin family. Class III subfamily. It depends on Zn(2+) as a cofactor.

It localises to the cytoplasm. It carries out the reaction N(6)-acetyl-L-lysyl-[protein] + NAD(+) + H2O = 2''-O-acetyl-ADP-D-ribose + nicotinamide + L-lysyl-[protein]. The enzyme catalyses N(6)-succinyl-L-lysyl-[protein] + NAD(+) + H2O = 2''-O-succinyl-ADP-D-ribose + nicotinamide + L-lysyl-[protein]. The catalysed reaction is N(6)-(2-hydroxyisobutanoyl)-L-lysyl-[protein] + NAD(+) + H2O = 2''-O-(2-hydroxyisobutanoyl)-ADP-D-ribose + nicotinamide + L-lysyl-[protein]. Functionally, NAD-dependent lysine deacetylase that specifically removes acetyl groups on target proteins. Also acts as a protein-lysine deacylase by mediating protein desuccinylation and de-2-hydroxyisobutyrylation. Modulates the activities of several proteins which are inactive in their acylated form. In Shigella flexneri, this protein is NAD-dependent protein deacylase.